A 435-amino-acid chain; its full sequence is MTTFSPREIVSELDRYIIGQHDAKRAVAIALRNRWRRQQLDPSLRDEVMPKNILMIGPTGVGKTEISRRLAKLAGAPFIKVEATKFTEVGYVGRDVEQIIRDLVEVGIGLVREKKRTEVQAKAHVSAEERVLDALVGTTASPATRESFRKKLRDGELDDKEIDIEVADAGSGMGGFEIPGMPGANIGVLNLSEMFGKAMGGRTKKVRTTVKASYTDLIRDESDKLIDNEVIQREAVRSTENDGIVFLDEIDKIAARDGGMGAGVSREGVQRDLLPLVEGTTVSTKYGPVKTDHILFIASGAFHVSKPSDLLPELQGRLPIRVELRPLNKEDFRRILTETEASLIRQYRALMETESLNLEFTDDAIDALADVAVHLNSSVENIGARRLQTVMERVLDDISYNAPDRGGTAVTIDAAYVREHVGDLAQNTDLSRFIL.

ATP-binding positions include isoleucine 18, 60-65, aspartate 248, glutamate 313, and arginine 385; that span reads GVGKTE.

It belongs to the ClpX chaperone family. HslU subfamily. A double ring-shaped homohexamer of HslV is capped on each side by a ring-shaped HslU homohexamer. The assembly of the HslU/HslV complex is dependent on binding of ATP.

The protein localises to the cytoplasm. Its function is as follows. ATPase subunit of a proteasome-like degradation complex; this subunit has chaperone activity. The binding of ATP and its subsequent hydrolysis by HslU are essential for unfolding of protein substrates subsequently hydrolyzed by HslV. HslU recognizes the N-terminal part of its protein substrates and unfolds these before they are guided to HslV for hydrolysis. The polypeptide is ATP-dependent protease ATPase subunit HslU (Rhizobium leguminosarum bv. trifolii (strain WSM2304)).